The following is a 307-amino-acid chain: Transmembrane protein 200B (307 aa).

Residues 1 to 38 (MTAGSPEECGEVRRSPEGRVSRLGRRLGRRRRPRSPPE) form a disordered region. Basic and acidic residues predominate over residues 10–20 (GEVRRSPEGRV). Residues 22 to 34 (RLGRRLGRRRRPR) show a composition bias toward basic residues. Residues 53-73 (GAFAALGALVVLVGMGIAVAG) traverse the membrane as a helical segment. The interval 81–111 (APGSRAANASSPQMSELRREGRGGGRAHGPH) is disordered. The N-linked (GlcNAc...) asparagine glycan is linked to N88. Residues 96–111 (ELRREGRGGGRAHGPH) are compositionally biased toward basic and acidic residues. Residues 116-136 (LLGPVIMGVGLFVFICANTLL) form a helical membrane-spanning segment. The segment at 180-211 (AVGCAEPEIWDPSPRRGTSPVPSVRSLRSEPA) is disordered.

It belongs to the TMEM200 family.

The protein localises to the membrane. This chain is Transmembrane protein 200B (TMEM200B), found in Homo sapiens (Human).